The following is a 217-amino-acid chain: Small ribosomal subunit protein uS3 (217 aa).

The 71-residue stretch at isoleucine 40–arginine 110 folds into the KH type-2 domain.

This sequence belongs to the universal ribosomal protein uS3 family. As to quaternary structure, part of the 30S ribosomal subunit. Forms a tight complex with proteins S10 and S14.

Binds the lower part of the 30S subunit head. Binds mRNA in the 70S ribosome, positioning it for translation. The sequence is that of Small ribosomal subunit protein uS3 from Rickettsia canadensis (strain McKiel).